A 1026-amino-acid chain; its full sequence is Glutactin (1026 aa).

A signal peptide spans 1–17; the sequence is MKPLLLVLALCGAQVHA. A sulfotyrosine mark is found at Y26 and Y29. N115 carries N-linked (GlcNAc...) asparagine glycosylation. C123 and C145 form a disulfide bridge. Y182 is subject to Sulfotyrosine. C298 and C316 form a disulfide bridge. N368 and N402 each carry an N-linked (GlcNAc...) asparagine glycan. The residue at position 559 (Y559) is a Sulfotyrosine. Positions 601–641 are disordered; it reads PITTTTTTTTTTTTTSRPYAYNPYANWQNRPSQQHPNWHPA. Positions 603–615 are enriched in low complexity; the sequence is TTTTTTTTTTTTT. The span at 625–636 shows a compositional bias: polar residues; sequence ANWQNRPSQQHP. Y645 is modified (sulfotyrosine). 2 disordered regions span residues 659 to 695 and 723 to 1026; these read EREQ…REQE and EREQ…NSRN. A compositionally biased stretch (basic and acidic residues) spans 723 to 752; sequence EREQYEREQQEREQREREELERQQREREQQ. Y727 carries the sulfotyrosine modification. An N-linked (GlcNAc...) asparagine glycan is attached at N810. The segment covering 811 to 854 has biased composition (basic and acidic residues); the sequence is FSEEDREQQQQEQLRREQQEQQEREYQLQLEREQQEREQQERGQ. A sulfotyrosine mark is found at Y836, Y862, Y865, Y868, Y922, and Y928. Over residues 855-866 the composition is skewed to low complexity; it reads QEPGPEEYPSYE. The span at 867–893 shows a compositional bias: basic and acidic residues; that stretch reads EYSRALQEKNAERDRIYAEEQERERQQ. The segment covering 923 to 944 has biased composition (basic and acidic residues); that stretch reads DGDRSYAEEQEREQQRRDQVEQ. Residues 945-969 show a composition bias toward acidic residues; it reads EREEQPDEDQGEEYERSPDEEEAAE. Residues Y981, Y984, and Y1006 each carry the sulfotyrosine modification. The span at 1002-1026 shows a compositional bias: basic and acidic residues; the sequence is EEERYRAQQEEEDRIQAERERNSRN.

It in the N-terminal section; belongs to the type-B carboxylesterase/lipase family. Extensively O-glycosylated and also N-glycosylated. In terms of processing, about four tyrosines are sulfated.

It localises to the secreted. Its subcellular location is the extracellular space. The protein localises to the extracellular matrix. It is found in the basement membrane. In terms of biological role, not known. Binds calcium ions. The chain is Glutactin (Glt) from Drosophila melanogaster (Fruit fly).